Consider the following 98-residue polypeptide: Cell division topological specificity factor (98 aa).

Belongs to the MinE family.

In terms of biological role, prevents the cell division inhibition by proteins MinC and MinD at internal division sites while permitting inhibition at polar sites. This ensures cell division at the proper site by restricting the formation of a division septum at the midpoint of the long axis of the cell. The protein is Cell division topological specificity factor of Nitrosomonas eutropha (strain DSM 101675 / C91 / Nm57).